We begin with the raw amino-acid sequence, 109 residues long: Sperm-specific class P protein 19 (109 aa).

The MSP domain maps to 1 to 109 (MSLTADPPAC…TVTIPMSATA (109 aa)).

As to quaternary structure, monomer. In terms of tissue distribution, expressed at higher level in testis.

The protein is Sperm-specific class P protein 19 (ssp-19) of Caenorhabditis elegans.